We begin with the raw amino-acid sequence, 286 residues long: Aquaporin PIP1-3 (286 aa).

At Met-1 the chain carries N-acetylmethionine. A disordered region spans residues 1–33; that stretch reads MEGKEEDVRVGANKFPERQPIGTSAQTDKDYKE. The Cytoplasmic portion of the chain corresponds to 1–54; the sequence is MEGKEEDVRVGANKFPERQPIGTSAQTDKDYKEPPPAPFFEPGELSSWSFYRAG. Residues 55–75 traverse the membrane as a helical segment; sequence IAEFIATFLFLYITVLTVMGV. At 76 to 81 the chain is on the extracellular side; sequence KRAPNM. Residues 82–102 traverse the membrane as a helical segment; that stretch reads CASVGIQGIAWAFGGMIFALV. Over 103 to 132 the chain is Cytoplasmic; sequence YCTAGISGGHINPAVTFGLFLARKLSLTRA. An NPA 1 motif is present at residues 114–116; the sequence is NPA. A helical transmembrane segment spans residues 133 to 153; sequence VFYIVMQCLGAICGAGVVKGF. The Extracellular portion of the chain corresponds to 154 to 174; sequence QPNPYQTLGGGANTVAHGYTK. The chain crosses the membrane as a helical span at residues 175–195; that stretch reads GSGLGAEIIGTFVLVYTVFSA. At 196 to 208 the chain is on the cytoplasmic side; it reads TDAKRSARDSHVP. The chain crosses the membrane as a helical span at residues 209–229; the sequence is ILAPLPIGFAVFLVHLATIPI. Topologically, residues 230–256 are extracellular; that stretch reads TGTGINPARSLGAAIIYNKDHAWDDHW. The NPA 2 motif lies at 235–237; that stretch reads NPA. The helical transmembrane segment at 257–277 threads the bilayer; that stretch reads IFWVGPFIGAALAALYHQLVI. Residues 278 to 286 lie on the Cytoplasmic side of the membrane; it reads RAIPFKSRS. Position 284 is a phosphoserine (Ser-284).

This sequence belongs to the MIP/aquaporin (TC 1.A.8) family. PIP (TC 1.A.8.11) subfamily. In terms of tissue distribution, expressed in roots, above ground, ripening fruit, flower buds, green siliques and senescing leaves.

Its subcellular location is the cell membrane. Its function is as follows. Water channel required to facilitate the transport of water across cell membrane. Its function is impaired by Hg(2+). The sequence is that of Aquaporin PIP1-3 (PIP1-3) from Arabidopsis thaliana (Mouse-ear cress).